A 394-amino-acid polypeptide reads, in one-letter code: Elongation factor Tu (394 aa).

One can recognise a tr-type G domain in the interval K10–E204. Residues G19–T26 are G1. A GTP-binding site is contributed by G19–T26. Position 26 (T26) interacts with Mg(2+). Positions G60–N64 are G2. The segment at D81 to G84 is G3. GTP is bound by residues D81–H85 and N136–D139. A G4 region spans residues N136–D139. The G5 stretch occupies residues S174–L176.

It belongs to the TRAFAC class translation factor GTPase superfamily. Classic translation factor GTPase family. EF-Tu/EF-1A subfamily. In terms of assembly, monomer.

The protein localises to the cytoplasm. It catalyses the reaction GTP + H2O = GDP + phosphate + H(+). Its function is as follows. GTP hydrolase that promotes the GTP-dependent binding of aminoacyl-tRNA to the A-site of ribosomes during protein biosynthesis. This Aeromonas salmonicida (strain A449) protein is Elongation factor Tu.